The chain runs to 561 residues: Corneodesmosin (561 aa).

The first 32 residues, Met-1–Ala-32, serve as a signal peptide directing secretion. Disordered stretches follow at residues Pro-41–Ser-275, Gly-415–Leu-466, and Pro-536–Ser-561. Positions Gly-61–Ser-99 are enriched in low complexity. A compositionally biased stretch (gly residues) spans Gly-116–Ser-127. 2 stretches are compositionally biased toward low complexity: residues Gln-128 to Ser-207 and Thr-224 to Ser-248. Polar residues predominate over residues Gly-415–Ile-430. The span at Thr-431–Leu-466 shows a compositional bias: low complexity.

The protein localises to the secreted. Functionally, important for the epidermal barrier integrity. The protein is Corneodesmosin (Cdsn) of Mus musculus (Mouse).